The sequence spans 178 residues: Long polar fimbria protein A (178 aa).

A signal peptide spans M1–A24.

It belongs to the fimbrial protein family.

The protein localises to the fimbrium. This chain is Long polar fimbria protein A (lpfA), found in Salmonella typhimurium (strain LT2 / SGSC1412 / ATCC 700720).